The chain runs to 397 residues: Elongation factor Tu (397 aa).

Residues 10–207 (KPHCNIGTIG…EVDKYIPQPE (198 aa)) form the tr-type G domain. Residues 19–26 (GHVDHGKT) are G1. A GTP-binding site is contributed by 19–26 (GHVDHGKT). Thr-26 is a Mg(2+) binding site. The interval 61–65 (GITIS) is G2. The segment at 82 to 85 (DCPG) is G3. GTP contacts are provided by residues 82–86 (DCPGH) and 137–140 (NKCD). Residues 137–140 (NKCD) are G4. The segment at 175–177 (SAL) is G5.

The protein belongs to the TRAFAC class translation factor GTPase superfamily. Classic translation factor GTPase family. EF-Tu/EF-1A subfamily. Monomer.

It is found in the cytoplasm. It catalyses the reaction GTP + H2O = GDP + phosphate + H(+). Functionally, GTP hydrolase that promotes the GTP-dependent binding of aminoacyl-tRNA to the A-site of ribosomes during protein biosynthesis. The protein is Elongation factor Tu of Azorhizobium caulinodans (strain ATCC 43989 / DSM 5975 / JCM 20966 / LMG 6465 / NBRC 14845 / NCIMB 13405 / ORS 571).